Consider the following 187-residue polypeptide: Large ribosomal subunit protein uL22 (187 aa).

2 stretches are compositionally biased toward basic and acidic residues: residues 158-168 (TKATDESEQAK) and 178-187 (RQKEKMMRNE). A disordered region spans residues 158–187 (TKATDESEQAKKKLSKKKLQRQKEKMMRNE).

It belongs to the universal ribosomal protein uL22 family.

This chain is Large ribosomal subunit protein uL22 (RpL17), found in Anopheles gambiae (African malaria mosquito).